Here is a 331-residue protein sequence, read N- to C-terminus: DNA-directed RNA polymerase subunit alpha (331 aa).

The alpha N-terminal domain (alpha-NTD) stretch occupies residues 1-246; the sequence is MMQTSRTLHN…GLFSPLQEVS (246 aa). Residues 256–331 form an alpha C-terminal domain (alpha-CTD) region; sequence AEDNQKNQIP…LTLPRERSKT (76 aa).

It belongs to the RNA polymerase alpha chain family. In cyanobacteria the RNAP catalytic core is composed of 2 alpha, 1 beta, 1 beta', 1 gamma and 1 omega subunit. When a sigma factor is associated with the core the holoenzyme is formed, which can initiate transcription.

It catalyses the reaction RNA(n) + a ribonucleoside 5'-triphosphate = RNA(n+1) + diphosphate. DNA-dependent RNA polymerase catalyzes the transcription of DNA into RNA using the four ribonucleoside triphosphates as substrates. This Synechococcus sp. (strain JA-3-3Ab) (Cyanobacteria bacterium Yellowstone A-Prime) protein is DNA-directed RNA polymerase subunit alpha.